The primary structure comprises 311 residues: Putative ribose-phosphate pyrophosphokinase 2 (311 aa).

ATP-binding positions include 38–40 (DGE) and 97–98 (RQ). Positions 131 and 171 each coordinate Mg(2+). D-ribose 5-phosphate is bound at residue Asp-219.

The protein belongs to the ribose-phosphate pyrophosphokinase family. Class I subfamily. Homohexamer. It depends on Mg(2+) as a cofactor.

It localises to the cytoplasm. It carries out the reaction D-ribose 5-phosphate + ATP = 5-phospho-alpha-D-ribose 1-diphosphate + AMP + H(+). It participates in metabolic intermediate biosynthesis; 5-phospho-alpha-D-ribose 1-diphosphate biosynthesis; 5-phospho-alpha-D-ribose 1-diphosphate from D-ribose 5-phosphate (route I): step 1/1. Functionally, involved in the biosynthesis of the central metabolite phospho-alpha-D-ribosyl-1-pyrophosphate (PRPP) via the transfer of pyrophosphoryl group from ATP to 1-hydroxyl of ribose-5-phosphate (Rib-5-P). The protein is Putative ribose-phosphate pyrophosphokinase 2 of Listeria innocua serovar 6a (strain ATCC BAA-680 / CLIP 11262).